The following is a 391-amino-acid chain: Geranylgeranyl diphosphate reductase (391 aa).

The protein belongs to the geranylgeranyl reductase family. ChlP subfamily.

It catalyses the reaction phytyl diphosphate + 3 NADP(+) = geranylgeranyl diphosphate + 3 NADPH + 3 H(+). Its pathway is porphyrin-containing compound metabolism; bacteriochlorophyll biosynthesis (light-independent). Its function is as follows. Catalyzes the stepwise hydrogenation of geranylgeraniol to phytol during bacteriochlorophyll A (BchlA) biosynthesis. The chain is Geranylgeranyl diphosphate reductase (bchP) from Rhodobacter capsulatus (strain ATCC BAA-309 / NBRC 16581 / SB1003).